We begin with the raw amino-acid sequence, 591 residues long: MTAEPEVRTLREVVLDQLGTAESRAYKMWLPPLTNPVPLNELIARDRRQPLRFALGIMDEPRRHLQDVWGVDVSGAGGNIGIGGAPQTGKSTLLQTMVMSAAATHSPRNVQFYCIDLGGGGLIYLENLPHVGGVANRSEPDKVNRVVAEMQAVMRQRETTFKEHRVGSIGMYRQLRDDPSQPVASDPYGDVFLIIDGWPGFVGEFPDLEGQVQDLAAQGLAFGVHVIISTPRWTELKSRVRDYLGTKIEFRLGDVNETQIDRITREIPANRPGRAVSMEKHHLMIGVPRFDGVHSADNLVEAITAGVTQIASQHTEQAPPVRVLPERIHLHELDPNPPGPESDYRTRWEIPIGLRETDLTPAHCHMHTNPHLLIFGAAKSGKTTIAHAIARAICARNSPQQVRFMLADYRSGLLDAVPDTHLLGAGAINRNSASLDEAVQALAVNLKKRLPPTDLTTAQLRSRSWWSGFDVVLLVDDWHMIVGAAGGMPPMAPLAPLLPAAADIGLHIIVTCQMSQAYKATMDKFVGAAFGSGAPTMFLSGEKQEFPSSEFKVKRRPPGQAFLVSPDGKEVIQAPYIEPPEEVFAAPPSAG.

FtsK domains lie at 65 to 259 (LQDV…NETQ) and 359 to 545 (LTPA…EKQE). ATP contacts are provided by residues 84 to 91 (GAPQTGKS) and 376 to 383 (GAAKSGKT).

Part of the ESX-1 / type VII secretion system (T7SS), which is composed of cytosolic and membrane components. The ESX-1 membrane complex is composed of EccB1, EccCa1, EccCb1, EccD1 and EccE1. Interacts with EccCa1, EspK and the C-terminus of EsxB. Residues 1-261 interact with EsxB and an artificial EsxB-EsxA heterodimer.

It is found in the cytoplasm. With respect to regulation, esxB binding to the second FtsK domain of EccCb1 causes multimerization; a subsequent unknown step relieves the allosteric inhibition of linker 2 on FtsK domain 1 (in EccCa1 subunit), activating the ATPase activity. Its function is as follows. Part of the ESX-1 specialized secretion system, which delivers several virulence factors to host cells during infection, including the key virulence factors EsxA (ESAT-6) and EsxB (CFP-10). EccCb1 may link the cytosolic components of the system with the membrane components. This Mycobacterium tuberculosis (strain ATCC 25618 / H37Rv) protein is ESX-1 secretion system protein EccCb1.